The primary structure comprises 349 residues: N-acetyl-gamma-glutamyl-phosphate reductase (349 aa).

The active site involves cysteine 149.

This sequence belongs to the NAGSA dehydrogenase family. Type 1 subfamily.

It localises to the cytoplasm. The catalysed reaction is N-acetyl-L-glutamate 5-semialdehyde + phosphate + NADP(+) = N-acetyl-L-glutamyl 5-phosphate + NADPH + H(+). It functions in the pathway amino-acid biosynthesis; L-arginine biosynthesis; N(2)-acetyl-L-ornithine from L-glutamate: step 3/4. Functionally, catalyzes the NADPH-dependent reduction of N-acetyl-5-glutamyl phosphate to yield N-acetyl-L-glutamate 5-semialdehyde. The chain is N-acetyl-gamma-glutamyl-phosphate reductase from Acinetobacter baumannii (strain SDF).